The following is a 179-amino-acid chain: UPF0227 protein VC0395_A1482/VC395_2007 (179 aa).

This sequence belongs to the UPF0227 family.

The chain is UPF0227 protein VC0395_A1482/VC395_2007 from Vibrio cholerae serotype O1 (strain ATCC 39541 / Classical Ogawa 395 / O395).